The sequence spans 390 residues: Protein AC109 (390 aa).

It is found in the host cytoplasm. It localises to the host nucleus. In terms of biological role, plays a role in the transport of the budded virion (BV) to the host nucleus and for occlusion of viral progeny. The chain is Protein AC109 (ORF109) from Lepidoptera (butterflies and moths).